A 174-amino-acid polypeptide reads, in one-letter code: Shikimate kinase (174 aa).

Gly15–Thr20 serves as a coordination point for ATP. Ser19 provides a ligand contact to Mg(2+). Substrate-binding residues include Asp37, Arg61, and Gly82. Residue Arg120 participates in ATP binding. A substrate-binding site is contributed by Arg138.

The protein belongs to the shikimate kinase family. In terms of assembly, monomer. It depends on Mg(2+) as a cofactor.

The protein resides in the cytoplasm. It catalyses the reaction shikimate + ATP = 3-phosphoshikimate + ADP + H(+). Its pathway is metabolic intermediate biosynthesis; chorismate biosynthesis; chorismate from D-erythrose 4-phosphate and phosphoenolpyruvate: step 5/7. Catalyzes the specific phosphorylation of the 3-hydroxyl group of shikimic acid using ATP as a cosubstrate. This is Shikimate kinase from Staphylococcus aureus (strain NCTC 8325 / PS 47).